Here is a 131-residue protein sequence, read N- to C-terminus: Small ribosomal subunit protein uS11 (131 aa).

Belongs to the universal ribosomal protein uS11 family. Part of the 30S ribosomal subunit. Interacts with proteins S7 and S18. Binds to IF-3.

Its function is as follows. Located on the platform of the 30S subunit, it bridges several disparate RNA helices of the 16S rRNA. Forms part of the Shine-Dalgarno cleft in the 70S ribosome. In Pelobacter propionicus (strain DSM 2379 / NBRC 103807 / OttBd1), this protein is Small ribosomal subunit protein uS11.